Reading from the N-terminus, the 294-residue chain is Glutamyl-Q tRNA(Asp) synthetase (294 aa).

L-glutamate is bound by residues 7–11 and glutamate 43; that span reads RFAPS. The 'HIGH' region motif lies at 10-20; sequence PSPSGPLHFGS. The Zn(2+) site is built by cysteine 99, cysteine 101, tyrosine 113, and cysteine 117. L-glutamate is bound by residues tyrosine 168 and arginine 186. The 'KMSKS' region signature appears at 224–228; that stretch reads KLSKQ. Lysine 227 provides a ligand contact to ATP.

Belongs to the class-I aminoacyl-tRNA synthetase family. GluQ subfamily. The cofactor is Zn(2+).

In terms of biological role, catalyzes the tRNA-independent activation of glutamate in presence of ATP and the subsequent transfer of glutamate onto a tRNA(Asp). Glutamate is transferred on the 2-amino-5-(4,5-dihydroxy-2-cyclopenten-1-yl) moiety of the queuosine in the wobble position of the QUC anticodon. The chain is Glutamyl-Q tRNA(Asp) synthetase from Vibrio parahaemolyticus serotype O3:K6 (strain RIMD 2210633).